We begin with the raw amino-acid sequence, 300 residues long: Delta-9 desaturase-like 4 protein (300 aa).

A run of 2 helical transmembrane segments spans residues 39–59 (VVVIVHFLCLLAPFNFKWEAL) and 61–81 (FGLVLFALTTLSITFSFHRNL). Residues 78–83 (HRNLSH) carry the Histidine box-1 motif. Residues 115 to 119 (HRFHH) carry the Histidine box-2 motif. The next 2 helical transmembrane spans lie at 175-195 (IAVHILMFWTILYLYGGLPYL) and 200-220 (GVGIFIGYHVTWLVNSACHIW). Positions 247-251 (HNNHH) match the Histidine box-3 motif.

This sequence belongs to the fatty acid desaturase type 1 family. Requires Fe cation as cofactor.

It is found in the endoplasmic reticulum membrane. Its pathway is lipid metabolism; polyunsaturated fatty acid biosynthesis. The protein is Delta-9 desaturase-like 4 protein of Arabidopsis thaliana (Mouse-ear cress).